Here is a 62-residue protein sequence, read N- to C-terminus: MTIAFQLAVFALIATSSILLISVPVVFASSDGWSSNKNVVFSGTSLWIGLVFLVAILNSLIS.

The next 2 helical transmembrane spans lie at 8 to 28 and 41 to 61; these read AVFALIATSSILLISVPVVFA and FSGTSLWIGLVFLVAILNSLI.

This sequence belongs to the PsbZ family. In terms of assembly, PSII is composed of 1 copy each of membrane proteins PsbA, PsbB, PsbC, PsbD, PsbE, PsbF, PsbH, PsbI, PsbJ, PsbK, PsbL, PsbM, PsbT, PsbY, PsbZ, Psb30/Ycf12, at least 3 peripheral proteins of the oxygen-evolving complex and a large number of cofactors. It forms dimeric complexes.

Its subcellular location is the plastid. The protein resides in the chloroplast thylakoid membrane. In terms of biological role, may control the interaction of photosystem II (PSII) cores with the light-harvesting antenna, regulates electron flow through the 2 photosystem reaction centers. PSII is a light-driven water plastoquinone oxidoreductase, using light energy to abstract electrons from H(2)O, generating a proton gradient subsequently used for ATP formation. This chain is Photosystem II reaction center protein Z, found in Liriodendron tulipifera (Tuliptree).